The primary structure comprises 138 residues: Large ribosomal subunit protein mL54 (138 aa).

Residues 1-14 constitute a mitochondrion transit peptide; it reads MATKRLFGATRTWA.

Belongs to the mitochondrion-specific ribosomal protein mL54 family. As to quaternary structure, component of the mitochondrial large ribosomal subunit (mt-LSU). Mature mammalian 55S mitochondrial ribosomes consist of a small (28S) and a large (39S) subunit. The 28S small subunit contains a 12S ribosomal RNA (12S mt-rRNA) and 30 different proteins. The 39S large subunit contains a 16S rRNA (16S mt-rRNA), a copy of mitochondrial valine transfer RNA (mt-tRNA(Val)), which plays an integral structural role, and 52 different proteins.

It is found in the mitochondrion. The protein is Large ribosomal subunit protein mL54 (MRPL54) of Homo sapiens (Human).